The primary structure comprises 361 residues: Large-conductance mechanosensitive channel MscMJLR (361 aa).

5 helical membrane passes run 20-40 (ILSLISIILFIVIGKYANALI), 65-85 (LPVAIAIILSGFYFGVNFLYL), 89-109 (LKTAVNEGILTAFILCVVVFF), 137-157 (IVVLTKKLVRLVVWVVGLLLI), and 177-197 (LAVALASQNLVSNLIAGLIIL).

The protein belongs to the MscS (TC 1.A.23) family.

It is found in the cell membrane. Its function is as follows. Large-conductance mechanosensitive channel that opens in response to stretch forces in the membrane lipid bilayer. Selective for cations. Rectifies with voltage. This Methanocaldococcus jannaschii (strain ATCC 43067 / DSM 2661 / JAL-1 / JCM 10045 / NBRC 100440) (Methanococcus jannaschii) protein is Large-conductance mechanosensitive channel MscMJLR.